The chain runs to 393 residues: G protein-activated inward rectifier potassium channel 3 (393 aa).

The disordered stretch occupies residues 1–23 (MAQENAAFSPGSEEPPRRRGRQR). Topologically, residues 1-57 (MAQENAAFSPGSEEPPRRRGRQRYVEKDGRCNVQQGNVRETYRYLTDLFTTLVDLQW) are cytoplasmic. A helical membrane pass occupies residues 58–82 (RLSLLFFVLAYALTWLFFGAIWWLI). Over 83-106 (AYGRGDLEHLEDTAWTPCVNNLNG) the chain is Extracellular. Positions 107-118 (FVAAFLFSIETE) form an intramembrane region, helical; Pore-forming. Residues 119 to 125 (TTIGYGH) constitute an intramembrane region (pore-forming). Residues 120 to 125 (TIGYGH) carry the Selectivity filter motif. Over 126 to 134 (RVITDQCPE) the chain is Extracellular. Residues 135–156 (GIVLLLLQAILGSMVNAFMVGC) traverse the membrane as a helical segment. Residues 157-393 (MFVKISQPNK…LPPPESESKV (237 aa)) lie on the Cytoplasmic side of the membrane. Positions 360 to 393 (KVEEEGAGEGAGAGDGADKEQNGCLPPPESESKV) are disordered. The span at 384–393 (LPPPESESKV) shows a compositional bias: pro residues. The PDZ-binding motif lies at 390–393 (ESKV).

It belongs to the inward rectifier-type potassium channel (TC 1.A.2.1) family. KCNJ9 subfamily. Associates with KCNJ3/GIRK1 to form a G-protein-activated heteromultimer pore-forming unit. Interacts (via PDZ-binding motif) with SNX27 (via PDZ domain); the interaction is required when endocytosed to prevent degradation in lysosomes and promote recycling to the plasma membrane.

It is found in the membrane. The catalysed reaction is K(+)(in) = K(+)(out). In terms of biological role, this receptor is controlled by G proteins. Inward rectifier potassium channels are characterized by a greater tendency to allow potassium to flow into the cell rather than out of it. Their voltage dependence is regulated by the concentration of extracellular potassium; as external potassium is raised, the voltage range of the channel opening shifts to more positive voltages. The inward rectification is mainly due to the blockage of outward current by internal magnesium. Unable to produce channel activity when expressed alone but forms a functional channel in association with KCNJ3/GIRK1. This Rattus norvegicus (Rat) protein is G protein-activated inward rectifier potassium channel 3 (Kcnj9).